A 443-amino-acid chain; its full sequence is UDP-N-acetylmuramate--L-alanine ligase (443 aa).

Residue 110 to 116 participates in ATP binding; sequence GAHGKTS.

Belongs to the MurCDEF family.

The protein localises to the cytoplasm. It carries out the reaction UDP-N-acetyl-alpha-D-muramate + L-alanine + ATP = UDP-N-acetyl-alpha-D-muramoyl-L-alanine + ADP + phosphate + H(+). Its pathway is cell wall biogenesis; peptidoglycan biosynthesis. Cell wall formation. The polypeptide is UDP-N-acetylmuramate--L-alanine ligase (Streptococcus gordonii (strain Challis / ATCC 35105 / BCRC 15272 / CH1 / DL1 / V288)).